We begin with the raw amino-acid sequence, 927 residues long: Protein LONGIFOLIA 1 (927 aa).

Disordered stretches follow at residues 41 to 198, 210 to 257, 460 to 588, and 605 to 626; these read TGDE…EGRR, YDER…GHRR, AQKV…SDSN, and YERN…DLGM. A compositionally biased stretch (low complexity) spans 86–114; it reads SSESSSRLSFSSSPCSSSFSSADISTTAS. Over residues 115–125 the composition is skewed to polar residues; that stretch reads QFEQPGLSNGE. The span at 146-165 shows a compositional bias: basic and acidic residues; that stretch reads DIRELVRSSIHKETRTRDEE. Over residues 182-193 the composition is skewed to polar residues; it reads KESSPSRNSNEW. Residues 210–226 show a composition bias toward basic and acidic residues; it reads YDERETRKTGAKLKETP. The segment covering 232-245 has biased composition (low complexity); the sequence is SRSNSFRSARSSCS. Composition is skewed to polar residues over residues 483 to 500 and 538 to 553; these read QTES…QSKS and NKNQ…TESA. Composition is skewed to basic and acidic residues over residues 569–584 and 605–616; these read SEDR…RSLR and YERNSDITEQHT.

Interacts (via C-terminus) with TON1A and TON1B. In terms of tissue distribution, expressed in roots, petioles, leaf blades and floral organs.

Its subcellular location is the nucleus. In terms of biological role, in association with LNG2, regulates leaf morphology by promoting longitudinal polar cell elongation independently of ROT3. The protein is Protein LONGIFOLIA 1 (LNG1) of Arabidopsis thaliana (Mouse-ear cress).